Reading from the N-terminus, the 324-residue chain is MASDVSSHLLTVTQSRWTIHHMYNKLLILALFTPVILESIIYVSGPQGGNVTLVSNFTSNISARWFRWDGNDSHLICFYKRGEGLSTPYVGLSLSCAANQITIFNLTLNDSGRYGAEGFTRSGENETFLWYNLTVKPKPLETTTASNVTTIVTTTPTVIGTKSNVTGNASLAPQLRAVAGFLNQTPRENNTHLALGEGFVPTMTNPGLYASENYNGNYELTEAANTARTNSSDWVTLGTSASLLRSTETAVNPSNATTVTPQPVEYPAGEVQYQRTKTHYSWMLIIAIILIIFIIICLRAPQKVYDRWKDNKQYGQVFMTDTEL.

The tract at residues 36–138 (ILESIIYVSG…LWYNLTVKPK (103 aa)) is immunoglobulin V-like domain. The chain crosses the membrane as a helical span at residues 278–298 (THYSWMLIIAIILIIFIIICL).

Belongs to the RL11 family. In terms of processing, highly glycosylated.

Its subcellular location is the host cell membrane. Plays a role in the inhibition of pro-inflammatory cytokine production. This effect is mediated by the conserved Ig-like domain. This is Membrane protein UL8 (UL8) from Homo sapiens (Human).